A 104-amino-acid chain; its full sequence is Large ribosomal subunit protein uL24 (104 aa).

The protein belongs to the universal ribosomal protein uL24 family. In terms of assembly, part of the 50S ribosomal subunit.

In terms of biological role, one of two assembly initiator proteins, it binds directly to the 5'-end of the 23S rRNA, where it nucleates assembly of the 50S subunit. Its function is as follows. One of the proteins that surrounds the polypeptide exit tunnel on the outside of the subunit. This is Large ribosomal subunit protein uL24 from Flavobacterium johnsoniae (strain ATCC 17061 / DSM 2064 / JCM 8514 / BCRC 14874 / CCUG 350202 / NBRC 14942 / NCIMB 11054 / UW101) (Cytophaga johnsonae).